Consider the following 154-residue polypeptide: NADPH-dependent 7-cyano-7-deazaguanine reductase (154 aa).

The active-site Thioimide intermediate is the Cys-52. The active-site Proton donor is Asp-59. Residues Val-74 to Ser-76 and His-93 to Glu-94 each bind substrate.

The protein belongs to the GTP cyclohydrolase I family. QueF type 1 subfamily.

It is found in the cytoplasm. The catalysed reaction is 7-aminomethyl-7-carbaguanine + 2 NADP(+) = 7-cyano-7-deazaguanine + 2 NADPH + 3 H(+). The protein operates within tRNA modification; tRNA-queuosine biosynthesis. In terms of biological role, catalyzes the NADPH-dependent reduction of 7-cyano-7-deazaguanine (preQ0) to 7-aminomethyl-7-deazaguanine (preQ1). This is NADPH-dependent 7-cyano-7-deazaguanine reductase from Rhizobium rhizogenes (strain K84 / ATCC BAA-868) (Agrobacterium radiobacter).